The chain runs to 205 residues: Guanylate kinase (205 aa).

Positions 19 to 197 (PKLFTISAPA…AYRVLKSIFI (179 aa)) constitute a Guanylate kinase-like domain. 26–33 (APAGVGKT) contacts ATP.

It belongs to the guanylate kinase family.

It is found in the cytoplasm. The catalysed reaction is GMP + ATP = GDP + ADP. Functionally, essential for recycling GMP and indirectly, cGMP. The protein is Guanylate kinase (gmk) of Chlamydia pneumoniae (Chlamydophila pneumoniae).